A 259-amino-acid chain; its full sequence is Protein N-terminal and lysine N-methyltransferase efm7 (259 aa).

S-adenosyl-L-methionine-binding positions include Trp53, 80–82 (GAA), Asp102, Trp138, and Ala164.

It belongs to the class I-like SAM-binding methyltransferase superfamily. EFM7 family.

It localises to the cytoplasm. Functionally, S-adenosyl-L-methionine-dependent protein methyltransferase that trimethylates the N-terminal glycine 'Gly-2' of elongation factor 1-alpha, before also catalyzing the mono- and dimethylation of 'Lys-3'. This Emericella nidulans (strain FGSC A4 / ATCC 38163 / CBS 112.46 / NRRL 194 / M139) (Aspergillus nidulans) protein is Protein N-terminal and lysine N-methyltransferase efm7.